A 159-amino-acid polypeptide reads, in one-letter code: 2-C-methyl-D-erythritol 2,4-cyclodiphosphate synthase (159 aa).

A divalent metal cation is bound by residues Asp10 and His12. 4-CDP-2-C-methyl-D-erythritol 2-phosphate is bound by residues 10–12 and 36–37; these read DVH and HS. Position 44 (His44) interacts with a divalent metal cation. Residues 58–60, 63–67, 134–137, and Arg144 contribute to the 4-CDP-2-C-methyl-D-erythritol 2-phosphate site; these read DIG, FANTD, and TTNE.

It belongs to the IspF family. Homotrimer. The cofactor is a divalent metal cation.

It catalyses the reaction 4-CDP-2-C-methyl-D-erythritol 2-phosphate = 2-C-methyl-D-erythritol 2,4-cyclic diphosphate + CMP. It participates in isoprenoid biosynthesis; isopentenyl diphosphate biosynthesis via DXP pathway; isopentenyl diphosphate from 1-deoxy-D-xylulose 5-phosphate: step 4/6. Involved in the biosynthesis of isopentenyl diphosphate (IPP) and dimethylallyl diphosphate (DMAPP), two major building blocks of isoprenoid compounds. Catalyzes the conversion of 4-diphosphocytidyl-2-C-methyl-D-erythritol 2-phosphate (CDP-ME2P) to 2-C-methyl-D-erythritol 2,4-cyclodiphosphate (ME-CPP) with a corresponding release of cytidine 5-monophosphate (CMP). In Cytophaga hutchinsonii (strain ATCC 33406 / DSM 1761 / CIP 103989 / NBRC 15051 / NCIMB 9469 / D465), this protein is 2-C-methyl-D-erythritol 2,4-cyclodiphosphate synthase.